The sequence spans 295 residues: Phosphatidylserine decarboxylase proenzyme (295 aa).

Catalysis depends on charge relay system; for autoendoproteolytic cleavage activity residues aspartate 113, histidine 169, and serine 256. Serine 256 acts as the Schiff-base intermediate with substrate; via pyruvic acid; for decarboxylase activity in catalysis. A Pyruvic acid (Ser); by autocatalysis modification is found at serine 256.

The protein belongs to the phosphatidylserine decarboxylase family. PSD-B subfamily. Prokaryotic type II sub-subfamily. In terms of assembly, heterodimer of a large membrane-associated beta subunit and a small pyruvoyl-containing alpha subunit. Pyruvate serves as cofactor. In terms of processing, is synthesized initially as an inactive proenzyme. Formation of the active enzyme involves a self-maturation process in which the active site pyruvoyl group is generated from an internal serine residue via an autocatalytic post-translational modification. Two non-identical subunits are generated from the proenzyme in this reaction, and the pyruvate is formed at the N-terminus of the alpha chain, which is derived from the carboxyl end of the proenzyme. The autoendoproteolytic cleavage occurs by a canonical serine protease mechanism, in which the side chain hydroxyl group of the serine supplies its oxygen atom to form the C-terminus of the beta chain, while the remainder of the serine residue undergoes an oxidative deamination to produce ammonia and the pyruvoyl prosthetic group on the alpha chain. During this reaction, the Ser that is part of the protease active site of the proenzyme becomes the pyruvoyl prosthetic group, which constitutes an essential element of the active site of the mature decarboxylase.

The protein resides in the cell membrane. The catalysed reaction is a 1,2-diacyl-sn-glycero-3-phospho-L-serine + H(+) = a 1,2-diacyl-sn-glycero-3-phosphoethanolamine + CO2. It functions in the pathway phospholipid metabolism; phosphatidylethanolamine biosynthesis; phosphatidylethanolamine from CDP-diacylglycerol: step 2/2. Its function is as follows. Catalyzes the formation of phosphatidylethanolamine (PtdEtn) from phosphatidylserine (PtdSer). The chain is Phosphatidylserine decarboxylase proenzyme from Clostridium botulinum (strain 657 / Type Ba4).